Reading from the N-terminus, the 559-residue chain is Malate synthase, glyoxysomal (559 aa).

Arg-173 functions as the Proton acceptor in the catalytic mechanism. The active-site Proton donor is Asp-459. A Microbody targeting signal motif is present at residues 557 to 559; the sequence is CKL.

The protein belongs to the malate synthase family.

The protein localises to the glyoxysome. It catalyses the reaction glyoxylate + acetyl-CoA + H2O = (S)-malate + CoA + H(+). It functions in the pathway carbohydrate metabolism; glyoxylate cycle; (S)-malate from isocitrate: step 2/2. This Zea mays (Maize) protein is Malate synthase, glyoxysomal (LIP).